The chain runs to 366 residues: METGAVTGILNTTLAVVFTWVGYKTARIVWKYTPYSYPNARIKAMEAKLLSEQRFNELAESRTLNNFVVSLEDTDYKDYLASVSNYTVEEIERALERALAGTYELMVTILPKRVNPFFRLLLEEWDVRNITSVIKAKMVNEPASDYVVEIGTMLPKVKAMAEAKTMEEILVILEGTPYEEPYQKLLLGEISLKEFETELYRMYYAKLLNYALSKKEDERVILEEFVRLKIDKTNILTLLRAKAAKMGAEEIKPLIIPGGTIKLDSILHVDDLSMALAELDSTRYGAVIRDVREEVERDLSVLERALDRHIRERMNELTRFYPLSVATPLSYILQKEREVRKLRAIAKLIDDGVEPERIKELVGDAA.

The protein belongs to the V-ATPase V0D/AC39 subunit family. Has multiple subunits with at least A(3), B(3), C, D, E, F, H, I and proteolipid K(x).

The protein localises to the cell membrane. In terms of biological role, component of the A-type ATP synthase that produces ATP from ADP in the presence of a proton gradient across the membrane. The polypeptide is A-type ATP synthase subunit C (Thermococcus onnurineus (strain NA1)).